Reading from the N-terminus, the 398-residue chain is Flavohemoprotein (398 aa).

One can recognise a Globin domain in the interval 9 to 147 (QLTPAQIKII…LAKLLIDLEA (139 aa)). A heme b-binding site is contributed by His-93. Catalysis depends on charge relay system residues Tyr-103 and Glu-146. The segment at 155 to 398 (WRWFKDFKVT…KLEYFGPYDP (244 aa)) is reductase. In terms of domain architecture, FAD-binding FR-type spans 156-263 (RWFKDFKVTR…APPAGNFVYD (108 aa)). FAD is bound by residues Tyr-196 and 212-215 (REYS). 276–281 (GIGITP) contributes to the NADP(+) binding site. FAD is bound at residue 395–398 (PYDP).

The protein belongs to the globin family. It depends on FAD as a cofactor. The cofactor is heme b.

The protein localises to the cytoplasm. The enzyme catalyses 2 nitric oxide + NADPH + 2 O2 = 2 nitrate + NADP(+) + H(+). It carries out the reaction 2 nitric oxide + NADH + 2 O2 = 2 nitrate + NAD(+) + H(+). Its activity is regulated as follows. Inhibited by imidazoles. Functionally, nitric oxide dioxygenase involved in NO detoxification in an aerobic process, termed nitric oxide dioxygenase (NOD) reaction that utilizes O(2) and NAD(P)H to convert NO to nitrate, which protects the fungus from various noxious nitrogen compounds. Therefore, plays a central role in the inducible response to nitrosative stress. Plays a role in virulence since nitric oxide is generated by macrophages of the host immune system. The polypeptide is Flavohemoprotein (YHB1) (Candida albicans (strain SC5314 / ATCC MYA-2876) (Yeast)).